The following is a 365-amino-acid chain: Serine protease 40 (365 aa).

The N-terminal stretch at 1–34 is a signal peptide; it reads MCGIRAKKSGLGGYGAGLLAALLGVSFLSQHAQT. N-linked (GlcNAc...) asparagine glycosylation is present at Asn-44. A Peptidase S1 domain is found at 69–313; it reads IYGGQIAGAE…FDKWIKDNKK (245 aa). An intrachain disulfide couples Cys-94 to Cys-110. Active-site charge relay system residues include His-109 and Asp-159. 3 disulfide bridges follow: Cys-193/Cys-270, Cys-226/Cys-249, and Cys-260/Cys-288. Residue Ser-264 is the Charge relay system of the active site. Residues 312–343 are disordered; that stretch reads KKSSSNSKPGESPHHPGSPENENPEGDNKNQG.

Belongs to the peptidase S1 family. Expressed in testis. More specifically, abundantly expressed in the haploid round spermatid.

Its subcellular location is the cytoplasmic vesicle. The protein localises to the secretory vesicle. It is found in the acrosome. The protein resides in the secreted. May play an important role in the sperm/egg interaction; released during the acrosome reaction. This is Serine protease 40 (Prss40) from Mus musculus (Mouse).